Here is a 588-residue protein sequence, read N- to C-terminus: Ribonuclease Y (588 aa).

Residues 7–27 (VLLVAVLLLALIVLGAVLVGV) form a helical membrane-spanning segment. Residues 130–162 (ARRSGEREAAVLATTTREQAAEVERRAARMDDR) are disordered. The segment covering 148–162 (QAAEVERRAARMDDR) has biased composition (basic and acidic residues). The region spanning 278–359 (VVSVLHLPGD…HRIEEVHDLA (82 aa)) is the KH domain. The HD domain occupies 404-497 (VLKHLVETAH…TQASDACSGG (94 aa)).

It belongs to the RNase Y family.

The protein resides in the cell membrane. Its function is as follows. Endoribonuclease that initiates mRNA decay. The protein is Ribonuclease Y of Salinispora arenicola (strain CNS-205).